Here is a 511-residue protein sequence, read N- to C-terminus: Glutamate/gamma-aminobutyrate antiporter (511 aa).

Over 1–14 (MATLVQTGKAKQLT) the chain is Cytoplasmic. A helical transmembrane segment spans residues 15–35 (LLGFFAITASMVMAVYEYPTF). Over 36–41 (ATSGFS) the chain is Periplasmic. Residues 42–62 (LVFFLLLGGILWFIPVGLCAA) traverse the membrane as a helical segment. Residues 63 to 93 (EMATVDGWEEGGVFAWVSNTLGPRWGFAAIS) are Cytoplasmic-facing. Residues 94–114 (FGYLQIAIGFIPMLYFVLGAL) traverse the membrane as a helical segment. The Periplasmic segment spans residues 115-127 (SYILKWPALNEDP). A helical transmembrane segment spans residues 128 to 148 (ITKTIAALIILWALALTQFGG). Residues 149 to 157 (TKYTARIAK) lie on the Cytoplasmic side of the membrane. Residues 158 to 178 (VGFFAGILLPAFILIALAAIY) form a helical membrane-spanning segment. Residues 179 to 200 (LHSGAPVAIEMDSKTFFPDFSK) lie on the Periplasmic side of the membrane. A helical membrane pass occupies residues 201–221 (VGTLVVFVAFILSYMGVEASA). Over 222-239 (THVNEMSNPGRDYPLAML) the chain is Cytoplasmic. A helical membrane pass occupies residues 240 to 260 (LLMVAAICLSSVGGLSIAMVI). The Periplasmic segment spans residues 261–291 (PGNEINLSAGVMQTFTVLMSHVAPEIEWTVR). A helical membrane pass occupies residues 292–312 (VISALLLLGVLAEIASWIVGP). Residues 313-335 (SRGMYVTAQKNLLPAAFAKMNKN) are Cytoplasmic-facing. The helical transmembrane segment at 336–356 (GVPVTLVISQLVITSIALIIL) threads the bilayer. Residues 357–366 (TNTGGGNNMS) lie on the Periplasmic side of the membrane. Residues 367-387 (FLIALALTVVIYLCAYFMLFI) form a helical membrane-spanning segment. Residues 388-412 (GYIVLVLKHPDLKRTFNIPGGKGVK) lie on the Cytoplasmic side of the membrane. A helical membrane pass occupies residues 413 to 433 (LVVAIVGLLTSIMAFIVSFLP). At 434–445 (PDNIQGDSTDMY) the chain is on the periplasmic side. A helical membrane pass occupies residues 446–466 (VELLVVSFLVVLALPFILYAV). At 467 to 511 (HDRKGKANTGVTLEPINSQNAPKGHFFLHPRARSPHYIVMNDKKH) the chain is on the cytoplasmic side.

This sequence belongs to the amino acid-polyamine-organocation (APC) superfamily. Glutamate:GABA antiporter (GGA) (TC 2.A.3.7) family.

The protein localises to the cell inner membrane. The enzyme catalyses 4-aminobutanoate(in) + L-glutamate(out) = 4-aminobutanoate(out) + L-glutamate(in). Shows pH-dependent activity. The glutamate analog L-trans-pyrrolidine-2,4-dicarboxylic acid (L-PDC) blocks the uptake of glutamate by selective inhibition. Involved in glutaminase-dependent acid resistance. Exchanges extracellular glutamate (Glu) for intracellular gamma-aminobutyric acid (GABA) under acidic conditions. The ability to survive the extremely acidic conditions of the stomach is essential for successful colonization of the host by commensal and pathogenic bacteria. The polypeptide is Glutamate/gamma-aminobutyrate antiporter (gadC) (Escherichia coli O157:H7).